The sequence spans 313 residues: Glutaminase (313 aa).

Substrate-binding residues include Ser64, Asn116, Glu163, Asn170, Tyr194, Tyr246, and Val264.

Belongs to the glutaminase family. Homotetramer.

It carries out the reaction L-glutamine + H2O = L-glutamate + NH4(+). This Exiguobacterium sp. (strain ATCC BAA-1283 / AT1b) protein is Glutaminase.